The primary structure comprises 429 residues: Tyrosine-protein kinase STYK1 (429 aa).

The helical transmembrane segment at 30 to 50 (VIIVPALLVGGFLILLAIILW) threads the bilayer. The disordered stretch occupies residues 58–83 (SQRQSPGPRGTASVPASRGRSQEAAG). Residues 119–390 (LEVLEQIHSG…GQLLQRLEAA (272 aa)) form the Protein kinase domain. ATP is bound by residues 125–133 (IHSGSCGTL) and lysine 152. Aspartate 256 acts as the Proton acceptor in catalysis.

This sequence belongs to the protein kinase superfamily. Tyr protein kinase family. Highly expressed in colon and small intestine. Weakly or not expressed in spleen, skeletal muscle, liver, kidney, heart and brain. Expressed in transformed kidney cell lines (COS-1 and HEK293T).

It is found in the membrane. It catalyses the reaction L-tyrosyl-[protein] + ATP = O-phospho-L-tyrosyl-[protein] + ADP + H(+). Functionally, probable tyrosine protein-kinase, which has strong transforming capabilities on a variety of cell lines including NIH 3T3 fibroblasts and on athymic nude mice. When overexpressed, it can also induce tumor cell invasion as well as metastasis in distant organs. May act by activating both MAP kinase and phosphatidylinositol 3'-kinases (PI3K) pathways. This is Tyrosine-protein kinase STYK1 (Styk1) from Mus musculus (Mouse).